The following is a 225-amino-acid chain: Cytidylate kinase (225 aa).

An ATP-binding site is contributed by 10–18 (GPASSGKST).

It belongs to the cytidylate kinase family. Type 1 subfamily.

The protein resides in the cytoplasm. The enzyme catalyses CMP + ATP = CDP + ADP. It catalyses the reaction dCMP + ATP = dCDP + ADP. The sequence is that of Cytidylate kinase from Streptococcus sanguinis (strain SK36).